A 104-amino-acid polypeptide reads, in one-letter code: Protein ArtA (104 aa).

The sequence is that of Protein ArtA (artA) from Escherichia coli (strain K12).